Reading from the N-terminus, the 1186-residue chain is Sericin 1 (1186 aa).

The signal sequence occupies residues 1–21; the sequence is MRFVLCCTLIALAALSVKAFG. 2 stretches are compositionally biased toward polar residues: residues 39–48 and 104–115; these read AASSESSYLN and NGGSASAGQSRD. Disordered regions lie at residues 39-119, 131-494, and 518-1157; these read AASS…SSLR, AVAA…EDSS, and GGAT…VNRL. Low complexity predominate over residues 145–155; that stretch reads AQQNAQANWNA. Positions 180–198 are enriched in basic and acidic residues; that stretch reads SDKDITAASKDDSRADSSR. Residues 211–224 show a composition bias toward low complexity; it reads SESAGLSDRSASSS. The span at 256 to 275 shows a compositional bias: polar residues; it reads YYNSSPDGSYNAGTRDSSIS. A compositionally biased stretch (basic and acidic residues) spans 286-299; sequence ADKDQIRAANDRSS. Low complexity predominate over residues 300–312; it reads SKQLKQSSAQISS. Basic and acidic residues predominate over residues 321 to 334; sequence SKDRQYSNDKRSKS. 3 stretches are compositionally biased toward polar residues: residues 356–380, 393–409, and 416–445; these read RQSN…QTSK, AHSS…SSSY, and FSSS…ASRE. Composition is skewed to low complexity over residues 465-491, 518-537, 553-698, 705-1004, 1015-1075, and 1097-1145; these read ASQS…TLSE, GGAT…VSGA, SSSS…YGYS, RVSS…YSSS, SSSN…ASSE, and SSTT…TSSS. Tandem repeats lie at residues 593–630, 631–668, 669–706, 707–744, 745–782, 783–820, 821–858, 859–896, 897–934, 935–972, and 973–1010. Residues 1148–1157 show a composition bias toward basic residues; it reads RSHHSGVNRL.

As to expression, produced exclusively in the middle (MSG) section of silk glands.

It is found in the secreted. In terms of biological role, provides the silk fibroin thread with a sticky coating. Acts as a cement by sticking silk threads together. The chain is Sericin 1 (ser1) from Bombyx mori (Silk moth).